A 316-amino-acid polypeptide reads, in one-letter code: Olfactory receptor 2K2 (316 aa).

Topologically, residues 1-20 (MQGENFTIWSIFFLEGFSQY) are extracellular. N5 is a glycosylation site (N-linked (GlcNAc...) asparagine). A helical membrane pass occupies residues 21-41 (PGLEVVLFVFSLVMYLTTLLG). The Cytoplasmic portion of the chain corresponds to 42–65 (NSTLILITILDSRLKTPMYLFLGN). A helical transmembrane segment spans residues 66 to 86 (LSFMDICYTSASVPTLLVNLL). The Extracellular segment spans residues 87-97 (SSQKTIIFSGC). An intrachain disulfide couples C97 to C188. Residues 98–118 (AVQMYLSLAMGSTECVLLAVM) form a helical membrane-spanning segment. Residues 119–143 (AYDRYVAICNPLRYSIIMNRCVCAR) are Cytoplasmic-facing. A helical membrane pass occupies residues 144 to 164 (MATVSWVTGCLTALLETSFAL). Residues 165–199 (QIPLCGNLIDHFTCEILAVLKLACTSSLLMNTIML) are Extracellular-facing. Residues 200–220 (VVSILLLPIPMLLVCISYIFI) form a helical membrane-spanning segment. Residues 221 to 238 (LSTILRITSAEGRNKAFS) lie on the Cytoplasmic side of the membrane. Residues 239-259 (TCGAHLTVVILYYGAALSMYL) traverse the membrane as a helical segment. Over 260–270 (KPSSSNAQKID) the chain is Extracellular. Residues 271-291 (KIISLLYGVLTPMLNPIIYSL) form a helical membrane-spanning segment. Over 292–316 (RNKEVKDAMKKLLGKITLHQTHEHL) the chain is Cytoplasmic.

The protein belongs to the G-protein coupled receptor 1 family.

The protein localises to the cell membrane. Odorant receptor. This Homo sapiens (Human) protein is Olfactory receptor 2K2 (OR2K2).